The primary structure comprises 1090 residues: Solute carrier family 38 member 10 (1090 aa).

A run of 10 helical transmembrane segments spans residues 9–31 (WGLI…PFCF), 36–58 (IVLG…MFLV), 84–104 (LVET…YVVI), 123–143 (TVRV…LSLQ), 153–173 (FSAM…LSSL), 229–249 (IFAS…FFGY), 272–292 (MIRV…ILPC), 323–343 (VLTL…PNVE), 345–365 (ILGF…PALI), and 378–398 (VVLW…LSVT). Ser-441 is subject to Phosphoserine. 6 stretches are compositionally biased toward basic and acidic residues: residues 441-454 (SQEK…KEVL), 493-508 (EAHR…KVVV), 517-528 (PEEKKPPPRLPD), 544-560 (ESEK…EGKR), 587-596 (PRKEDSRPGN), and 607-623 (DSVE…REPA). 3 disordered regions span residues 441 to 675 (SQEK…AGSK), 729 to 831 (EIRQ…IDLR), and 857 to 1037 (KAAP…ELAP). Phosphoserine occurs at positions 608 and 636. Composition is skewed to basic and acidic residues over residues 654–665 (EAAEQREKKEAE), 729–744 (EIRQ…KPKP), and 758–767 (GQEEEAEHAG). Thr-769 carries the phosphothreonine modification. Position 887 is a phosphoserine (Ser-887). Polar residues predominate over residues 923-936 (RQSGPTKAPVQTQA). 3 stretches are compositionally biased toward basic and acidic residues: residues 954-973 (PEVR…EQHK), 1004-1013 (ENAKPNRDLK), and 1026-1037 (DLASHPEQELAP).

It belongs to the amino acid/polyamine transporter 2 family. Expressed in neurons, astrocytes and epithelial cells scattered throughout the central nervous system structures including striatum, ependyma, cerebral cortex, hippocampus, hypothalamus, thalamus, pons, and cerebellum (at protein level). Highly expressed in paraventricular hypothalamic nucleus, suprachiasmatic nucleus, anterior hypothalamic area central part, in lateral ventricule and in dorsal 3rd ventricule (at protein level). Expressed in choroid plexus epithelial cells (at protein level).

The protein localises to the membrane. The enzyme catalyses L-glutamate(out) = L-glutamate(in). It carries out the reaction L-glutamine(out) = L-glutamine(in). The catalysed reaction is L-alanine(in) = L-alanine(out). It catalyses the reaction L-serine(in) = L-serine(out). The enzyme catalyses L-leucine(in) = L-leucine(out). Functionally, facilitates bidirectional transport of amino acids. May act as a glutamate sensor that regulates glutamate-glutamine cycle and mTOR signaling in the brain. The transport mechanism remains to be elucidated. The chain is Solute carrier family 38 member 10 from Mus musculus (Mouse).